The primary structure comprises 446 residues: Tol-Pal system protein TolB (446 aa).

The signal sequence occupies residues 1-19 (MLLRYLFILFIIIPIKAFA).

Belongs to the TolB family. As to quaternary structure, the Tol-Pal system is composed of five core proteins: the inner membrane proteins TolA, TolQ and TolR, the periplasmic protein TolB and the outer membrane protein Pal. They form a network linking the inner and outer membranes and the peptidoglycan layer.

Its subcellular location is the periplasm. Functionally, part of the Tol-Pal system, which plays a role in outer membrane invagination during cell division and is important for maintaining outer membrane integrity. This Pelagibacter ubique (strain HTCC1062) protein is Tol-Pal system protein TolB.